Reading from the N-terminus, the 387-residue chain is MAETLFWTPLLVVLLAGLGDTEAQQTTLHPLVGRVFVHTLDHETFLSLPEHVAVPPAVHITYHAHLQGHPDLPRWLRYTQRSPHHPGFLYGSATPEDRGLQVIEVTAYNRDSFDTTRQRLVLEIGDPEGPLLPYQAEFLVRSHDAEEVLPSTPASRFLSALGGLWEPGELQLLNVTSALDRGGRVPLPIEGRKEGVYIKVGSASPFSTCLKMVASPDSHARCAQGQPPLLSCYDTLAPHFRVDWCNVTLVDKSVPEPADEVPTPGDGILEHDPFFCPPTEAPDRDFLVDALVTLLVPLLVALLLTLLLAYVMCCRREGRLKRDLATSDIQMVHHCTIHGNTEELRQMAASREVPRPLSTLPMFNVHTGERLPPRVDSAQVPLILDQH.

A signal peptide spans 1-23 (MAETLFWTPLLVVLLAGLGDTEA). Topologically, residues 24–290 (QQTTLHPLVG…APDRDFLVDA (267 aa)) are extracellular. 2 N-linked (GlcNAc...) asparagine glycosylation sites follow: asparagine 174 and asparagine 246. A helical membrane pass occupies residues 291-311 (LVTLLVPLLVALLLTLLLAYV). At 312 to 387 (MCCRREGRLK…AQVPLILDQH (76 aa)) the chain is on the cytoplasmic side. Serine 377 bears the Phosphoserine mark.

The protein belongs to the sarcoglycan alpha/epsilon family. As to quaternary structure, interacts with the syntrophin SNTA1. Cross-link to form 2 major subcomplexes: one consisting of SGCB, SGCD and SGCG and the other consisting of SGCB and SGCD. The association between SGCB and SGCG is particularly strong while SGCA is loosely associated with the other sarcoglycans. Most strongly expressed in skeletal muscle. Also expressed in cardiac muscle and, at much lower levels, in lung. In the fetus, most abundant in cardiac muscle and, at lower levels, in lung. Also detected in liver and kidney. Not expressed in brain.

It is found in the cell membrane. Its subcellular location is the sarcolemma. The protein resides in the cytoplasm. The protein localises to the cytoskeleton. Functionally, component of the sarcoglycan complex, a subcomplex of the dystrophin-glycoprotein complex which forms a link between the F-actin cytoskeleton and the extracellular matrix. This is Alpha-sarcoglycan (SGCA) from Homo sapiens (Human).